A 385-amino-acid polypeptide reads, in one-letter code: UDP-N-acetylglucosamine--N-acetylmuramyl-(pentapeptide) pyrophosphoryl-undecaprenol N-acetylglucosamine transferase (385 aa).

UDP-N-acetyl-alpha-D-glucosamine contacts are provided by residues 24–26, Asn143, Arg180, Ser214, and Gln310; that span reads TAG.

It belongs to the glycosyltransferase 28 family. MurG subfamily.

The protein resides in the cell membrane. It catalyses the reaction di-trans,octa-cis-undecaprenyl diphospho-N-acetyl-alpha-D-muramoyl-L-alanyl-D-glutamyl-meso-2,6-diaminopimeloyl-D-alanyl-D-alanine + UDP-N-acetyl-alpha-D-glucosamine = di-trans,octa-cis-undecaprenyl diphospho-[N-acetyl-alpha-D-glucosaminyl-(1-&gt;4)]-N-acetyl-alpha-D-muramoyl-L-alanyl-D-glutamyl-meso-2,6-diaminopimeloyl-D-alanyl-D-alanine + UDP + H(+). Its pathway is cell wall biogenesis; peptidoglycan biosynthesis. Functionally, cell wall formation. Catalyzes the transfer of a GlcNAc subunit on undecaprenyl-pyrophosphoryl-MurNAc-pentapeptide (lipid intermediate I) to form undecaprenyl-pyrophosphoryl-MurNAc-(pentapeptide)GlcNAc (lipid intermediate II). The polypeptide is UDP-N-acetylglucosamine--N-acetylmuramyl-(pentapeptide) pyrophosphoryl-undecaprenol N-acetylglucosamine transferase (Mycolicibacterium smegmatis (strain ATCC 700084 / mc(2)155) (Mycobacterium smegmatis)).